The sequence spans 157 residues: Endoribonuclease YbeY (157 aa).

3 residues coordinate Zn(2+): His-118, His-122, and His-128.

It belongs to the endoribonuclease YbeY family. Zn(2+) is required as a cofactor.

It is found in the cytoplasm. Its function is as follows. Single strand-specific metallo-endoribonuclease involved in late-stage 70S ribosome quality control and in maturation of the 3' terminus of the 16S rRNA. The polypeptide is Endoribonuclease YbeY (Shewanella loihica (strain ATCC BAA-1088 / PV-4)).